An 878-amino-acid polypeptide reads, in one-letter code: Fanconi-associated nuclease 1 homolog (878 aa).

Residues 32–59 (GKTCPLCNIKFSLASYRSHMNVCKVADD) form a UBZ4-type zinc finger. The Zn(2+) site is built by C35, C38, H50, and C54. Residues 88 to 180 (ENSGQEIPVN…QKSQSESQEA (93 aa)) form a disordered region. Over residues 142–161 (SEVRSVEKEIKKSPVWENRR) the composition is skewed to basic and acidic residues. A compositionally biased stretch (low complexity) spans 168–179 (QNSQKSQSESQE). Mn(2+) contacts are provided by E695, D823, E838, and V839. In terms of domain architecture, VRR-NUC spans 757–870 (QETIEDNIRR…GIKAEVCHVE (114 aa)).

It belongs to the FAN1 family. Mn(2+) is required as a cofactor. Requires Mg(2+) as cofactor.

It is found in the nucleus. The enzyme catalyses Hydrolytically removes 5'-nucleotides successively from the 3'-hydroxy termini of 3'-hydroxy-terminated oligonucleotides.. Functionally, nuclease required for the repair of DNA interstrand cross-links (ICL). Acts as a 5'-3' exonuclease that anchors at a cut end of DNA and cleaves DNA successively at every third nucleotide, allowing to excise an ICL from one strand through flanking incisions. This Caenorhabditis briggsae protein is Fanconi-associated nuclease 1 homolog (fan-1).